The sequence spans 689 residues: Glycine--tRNA ligase beta subunit (689 aa).

This sequence belongs to the class-II aminoacyl-tRNA synthetase family. In terms of assembly, tetramer of two alpha and two beta subunits.

The protein resides in the cytoplasm. It carries out the reaction tRNA(Gly) + glycine + ATP = glycyl-tRNA(Gly) + AMP + diphosphate. The sequence is that of Glycine--tRNA ligase beta subunit from Escherichia coli O17:K52:H18 (strain UMN026 / ExPEC).